Reading from the N-terminus, the 335-residue chain is tRNA N6-adenosine threonylcarbamoyltransferase (335 aa).

The Fe cation site is built by H110 and H114. Residues 132 to 136, D165, G178, and N271 contribute to the substrate site; that span reads LVSGG. D299 contacts Fe cation.

Belongs to the KAE1 / TsaD family. Fe(2+) is required as a cofactor.

It localises to the cytoplasm. It carries out the reaction L-threonylcarbamoyladenylate + adenosine(37) in tRNA = N(6)-L-threonylcarbamoyladenosine(37) in tRNA + AMP + H(+). In terms of biological role, required for the formation of a threonylcarbamoyl group on adenosine at position 37 (t(6)A37) in tRNAs that read codons beginning with adenine. Is involved in the transfer of the threonylcarbamoyl moiety of threonylcarbamoyl-AMP (TC-AMP) to the N6 group of A37, together with TsaE and TsaB. TsaD likely plays a direct catalytic role in this reaction. The sequence is that of tRNA N6-adenosine threonylcarbamoyltransferase from Campylobacter jejuni subsp. jejuni serotype O:6 (strain 81116 / NCTC 11828).